The chain runs to 599 residues: Putative fused cobalt transport protein CbiMQ (599 aa).

The segment at Met1–Ser239 is cbiM. 16 consecutive transmembrane segments (helical) span residues Trp12–Ile32, Leu44–Gly64, Phe74–Phe94, Thr106–Phe126, Ser140–Thr160, Leu162–Tyr182, Leu183–Leu203, Ile247–Leu267, Trp303–Leu323, Gln356–Ser376, Pro377–Ala397, Leu407–Gly427, Ile438–Ser458, Gly463–Leu483, Ile493–Ile513, and Met579–Leu599. Residues Asp341 to Leu599 are cbiQ.

This sequence in the N-terminal section; belongs to the CbiM family. It in the C-terminal section; belongs to the CbiQ family. Forms an energy-coupling factor (ECF) transporter complex composed of an ATP-binding protein (A component, CbiO), a transmembrane protein (T component, CbiQ) and 2 possible substrate-capture proteins (S components, CbiM and CbiN) of unknown stoichimetry.

It localises to the cell membrane. The protein operates within cofactor biosynthesis; adenosylcobalamin biosynthesis. Its function is as follows. Part of the energy-coupling factor (ECF) transporter complex CbiMNOQ involved in cobalt import. The sequence is that of Putative fused cobalt transport protein CbiMQ (cbiMQ) from Methanocorpusculum labreanum (strain ATCC 43576 / DSM 4855 / Z).